A 95-amino-acid chain; its full sequence is Defensin-A3 (95 aa).

A signal peptide spans 1 to 19 (MRTLGLLLALLFLAAQTPA). Residues 20–61 (QLMGEEAEEATGRPEATEAQEAAAALMAARAADRHVTDPEQQ) constitute a propeptide that is removed on maturation. 3 disulfide bridges follow: Cys-66–Cys-93, Cys-68–Cys-82, and Cys-72–Cys-92.

The protein belongs to the alpha-defensin family. As to expression, highly expressed in spleen, and expressed at lower levels in intestin and lung.

It is found in the secreted. Functionally, has antimicrobial activity. The protein is Defensin-A3 of Ornithorhynchus anatinus (Duckbill platypus).